Here is a 157-residue protein sequence, read N- to C-terminus: Beta-defensin 125 (157 aa).

The N-terminal stretch at 1–20 is a signal peptide; it reads MNILMLTFIICGLLTQVTKG. 3 disulfides stabilise this stretch: Cys-27–Cys-55, Cys-35–Cys-49, and Cys-39–Cys-56. Positions 109-157 are disordered; that stretch reads GETMTPETNTPETTMPPPETTTPETTMPPSETATSETMPPPSQRALTHN. Low complexity-rich tracts occupy residues 110-121 and 129-145; these read ETMTPETNTPET and TTPE…TSET.

It belongs to the beta-defensin family.

It is found in the secreted. Functionally, has antibacterial activity. The protein is Beta-defensin 125 (DEFB125) of Pan troglodytes (Chimpanzee).